The primary structure comprises 389 residues: Probable nitrate transporter NarT (389 aa).

Transmembrane regions (helical) follow at residues 14-34, 45-65, 69-89, 97-117, 139-159, 161-181, 211-231, 246-266, 268-288, 294-314, 331-351, and 353-373; these read TLSLVVGFMAWSIIAPLMPFI, ISIILAIPVILGSVLRVPFGY, IVGAKWVFFTSFIVLLFPIFF, GMLMASGFFLGVGGAIFSVGV, GNIGTAVSSFLAPPIAGIIGW, TTVRSYLIIIALFALIMFIFG, WYFITFGAFVAFGIFLPNYLV, GVFIALATFLRPIGGILGDKF, AVKVLMIDFVVMIIGAIILGI, LFTVGCLTISICAGIGNGLIF, IVSMMGGLGGFFPPLVITYVA, and LTGSSHLAFIFLAVFGCIALF.

The protein belongs to the major facilitator superfamily. Nitrate/nitrite porter (TC 2.A.1.8) family.

The protein resides in the cell membrane. In terms of biological role, probably required for nitrate uptake under anoxic conditions. Also possibly involved in excretion of nitrite produced by the dissimilatory reduction of nitrate. This Staphylococcus aureus (strain bovine RF122 / ET3-1) protein is Probable nitrate transporter NarT (narT).